Reading from the N-terminus, the 362-residue chain is Aminomethyltransferase (362 aa).

This sequence belongs to the GcvT family. The glycine cleavage system is composed of four proteins: P, T, L and H.

It catalyses the reaction N(6)-[(R)-S(8)-aminomethyldihydrolipoyl]-L-lysyl-[protein] + (6S)-5,6,7,8-tetrahydrofolate = N(6)-[(R)-dihydrolipoyl]-L-lysyl-[protein] + (6R)-5,10-methylene-5,6,7,8-tetrahydrofolate + NH4(+). Its function is as follows. The glycine cleavage system catalyzes the degradation of glycine. The chain is Aminomethyltransferase from Pseudothermotoga lettingae (strain ATCC BAA-301 / DSM 14385 / NBRC 107922 / TMO) (Thermotoga lettingae).